Consider the following 253-residue polypeptide: Triosephosphate isomerase (253 aa).

13-15 (NWK) contacts substrate. His100 (electrophile) is an active-site residue. Residue Glu169 is the Proton acceptor of the active site. Residues Gly175, Ser208, and 229–230 (GG) contribute to the substrate site.

The protein belongs to the triosephosphate isomerase family. Homodimer.

It localises to the cytoplasm. The catalysed reaction is D-glyceraldehyde 3-phosphate = dihydroxyacetone phosphate. The protein operates within carbohydrate biosynthesis; gluconeogenesis. It participates in carbohydrate degradation; glycolysis; D-glyceraldehyde 3-phosphate from glycerone phosphate: step 1/1. Its function is as follows. Involved in the gluconeogenesis. Catalyzes stereospecifically the conversion of dihydroxyacetone phosphate (DHAP) to D-glyceraldehyde-3-phosphate (G3P). This chain is Triosephosphate isomerase, found in Synechococcus sp. (strain RCC307).